Reading from the N-terminus, the 193-residue chain is Potassium-transporting ATPase KdpC subunit (193 aa).

Residues 7–27 (PLVVLFVILTAVTGLAYPAVM) form a helical membrane-spanning segment.

Belongs to the KdpC family. As to quaternary structure, the system is composed of three essential subunits: KdpA, KdpB and KdpC.

Its subcellular location is the cell inner membrane. Part of the high-affinity ATP-driven potassium transport (or Kdp) system, which catalyzes the hydrolysis of ATP coupled with the electrogenic transport of potassium into the cytoplasm. This subunit acts as a catalytic chaperone that increases the ATP-binding affinity of the ATP-hydrolyzing subunit KdpB by the formation of a transient KdpB/KdpC/ATP ternary complex. In Burkholderia cenocepacia (strain ATCC BAA-245 / DSM 16553 / LMG 16656 / NCTC 13227 / J2315 / CF5610) (Burkholderia cepacia (strain J2315)), this protein is Potassium-transporting ATPase KdpC subunit.